Here is a 479-residue protein sequence, read N- to C-terminus: Adenosylhomocysteinase (479 aa).

Residues Thr-66, Asp-142, and Glu-203 each contribute to the substrate site. NAD(+) is bound at residue 204–206 (TTT). Substrate is bound by residues Lys-233 and Asp-237. NAD(+) contacts are provided by residues Asn-238, 267 to 272 (GYGDVG), Glu-290, Asn-325, 346 to 348 (IGH), and Asn-394.

The protein belongs to the adenosylhomocysteinase family. NAD(+) is required as a cofactor.

Its subcellular location is the cytoplasm. It catalyses the reaction S-adenosyl-L-homocysteine + H2O = L-homocysteine + adenosine. It participates in amino-acid biosynthesis; L-homocysteine biosynthesis; L-homocysteine from S-adenosyl-L-homocysteine: step 1/1. Its function is as follows. May play a key role in the regulation of the intracellular concentration of adenosylhomocysteine. In Nitratidesulfovibrio vulgaris (strain DSM 19637 / Miyazaki F) (Desulfovibrio vulgaris), this protein is Adenosylhomocysteinase.